Consider the following 193-residue polypeptide: Acyl carrier protein phosphodiesterase (193 aa).

Belongs to the AcpH family.

It carries out the reaction holo-[ACP] + H2O = apo-[ACP] + (R)-4'-phosphopantetheine + H(+). In terms of biological role, converts holo-ACP to apo-ACP by hydrolytic cleavage of the phosphopantetheine prosthetic group from ACP. The protein is Acyl carrier protein phosphodiesterase of Salmonella choleraesuis (strain SC-B67).